The following is a 147-amino-acid chain: Phospholipase A2 SSD1043 (147 aa).

An N-terminal signal peptide occupies residues 1–22 (MSPKFMFFSIIAVWSCAAVTEA). Residues 23 to 28 (LFIQHR) constitute a propeptide that is removed on maturation. 5 cysteine pairs are disulfide-bonded: Cys-55–Cys-71, Cys-70–Cys-130, Cys-77–Cys-123, Cys-86–Cys-116, and Cys-109–Cys-121. Ca(2+) is bound by residues Gly-56 and Gly-58. His-74 is a catalytic residue. Asp-75 serves as a coordination point for Ca(2+). Asp-124 is an active-site residue.

It depends on Ca(2+) as a cofactor. As to expression, expressed by the venom gland.

It is found in the secreted. It carries out the reaction a 1,2-diacyl-sn-glycero-3-phosphocholine + H2O = a 1-acyl-sn-glycero-3-phosphocholine + a fatty acid + H(+). PLA2 catalyzes the calcium-dependent hydrolysis of the 2-acyl groups in 3-sn-phosphoglycerides. The chain is Phospholipase A2 SSD1043 from Scolopendra dehaani (Thai centipede).